The chain runs to 439 residues: Histidine--tRNA ligase (439 aa).

Belongs to the class-II aminoacyl-tRNA synthetase family. In terms of assembly, homodimer.

The protein localises to the cytoplasm. It carries out the reaction tRNA(His) + L-histidine + ATP = L-histidyl-tRNA(His) + AMP + diphosphate + H(+). The protein is Histidine--tRNA ligase of Clostridium tetani (strain Massachusetts / E88).